Reading from the N-terminus, the 268-residue chain is Sexual development regulator velC (268 aa).

The span at 1–13 shows a compositional bias: basic and acidic residues; the sequence is MPHGFDKLLHPEP. Disordered stretches follow at residues 1–124 and 142–165; these read MPHG…DNFS and DPDP…NPPH. Positions 14-26 are enriched in pro residues; it reads EPQSPSPPPPPRR. The Velvet domain maps to 28 to 257; sequence STQSRYHLHI…ELGFVELKTR (230 aa). Over residues 92-121 the composition is skewed to basic and acidic residues; sequence DGNRDREREREHERERERERETDGVARTDD.

This sequence belongs to the velvet family. VelC subfamily. In terms of assembly, interacts with velA and vosA.

The protein resides in the nucleus. Functionally, velvet-domain-containing protein that acts as a positive regulator of sexual development. The polypeptide is Sexual development regulator velC (Penicillium rubens (strain ATCC 28089 / DSM 1075 / NRRL 1951 / Wisconsin 54-1255) (Penicillium chrysogenum)).